Consider the following 295-residue polypeptide: HTH-type transcriptional activator IlvY (295 aa).

One can recognise an HTH lysR-type domain in the interval 1 to 58 (MDLRDLKTFLHLAESRHFGRSARAMHVSPSTLSRQIQRLEEDLGQPLFVRDNRTVTLT). The segment at residues 18–37 (FGRSARAMHVSPSTLSRQIQ) is a DNA-binding region (H-T-H motif).

This sequence belongs to the LysR transcriptional regulatory family.

The protein localises to the cytoplasm. This protein activates the transcription of the IlvC gene in the presence of acetolactate or acetohydroxybutyrate. IlvY is also a negative regulator of its own expression. The sequence is that of HTH-type transcriptional activator IlvY (ilvY) from Salmonella typhi.